The chain runs to 383 residues: Chorismate synthase (383 aa).

Residues arginine 40 and arginine 46 each coordinate NADP(+). FMN is bound by residues 128-130 (RAS), glycine 291, 306-310 (KPIPT), and arginine 332.

It belongs to the chorismate synthase family. As to quaternary structure, homotetramer. It depends on FMNH2 as a cofactor.

It carries out the reaction 5-O-(1-carboxyvinyl)-3-phosphoshikimate = chorismate + phosphate. Its pathway is metabolic intermediate biosynthesis; chorismate biosynthesis; chorismate from D-erythrose 4-phosphate and phosphoenolpyruvate: step 7/7. Catalyzes the anti-1,4-elimination of the C-3 phosphate and the C-6 proR hydrogen from 5-enolpyruvylshikimate-3-phosphate (EPSP) to yield chorismate, which is the branch point compound that serves as the starting substrate for the three terminal pathways of aromatic amino acid biosynthesis. This reaction introduces a second double bond into the aromatic ring system. The chain is Chorismate synthase from Moorella thermoacetica (strain ATCC 39073 / JCM 9320).